The following is a 51-amino-acid chain: Insulin (51 aa).

3 disulfides stabilise this stretch: C7–C37, C19–C50, and C36–C41.

It belongs to the insulin family. Heterodimer of a B chain and an A chain linked by two disulfide bonds.

It is found in the secreted. Insulin decreases blood glucose concentration. It increases cell permeability to monosaccharides, amino acids and fatty acids. It accelerates glycolysis, the pentose phosphate cycle, and glycogen synthesis in liver. The protein is Insulin (INS) of Elephas maximus (Indian elephant).